A 424-amino-acid polypeptide reads, in one-letter code: DUF21 domain-containing protein At4g33700 (424 aa).

Topologically, residues 1 to 11 (MAVEYVCCSPN) are extracellular. One can recognise a CNNM transmembrane domain in the interval 8–191 (CSPNFFIHIA…GKGGELTHDE (184 aa)). The chain crosses the membrane as a helical span at residues 12–32 (FFIHIAVIVFLVLFAGLMSGL). Over 33–70 (TLGLMSLSLVDLEVLAKSGTPEHRKYAAKILPVVKNQH) the chain is Cytoplasmic. A helical membrane pass occupies residues 71–91 (LLLVTLLICNAAAMETLPIFL). Topologically, residues 92–94 (DGL) are extracellular. Residues 95–115 (VTAWGAILISVTLILLFGEII) form a helical membrane-spanning segment. The Cytoplasmic segment spans residues 116-136 (PQSICSRYGLAIGATVAPFVR). The chain crosses the membrane as a helical span at residues 137 to 157 (VLVFICLPVAWPISKLLDFLL). Residues 158-424 (GHRRAALFRR…DETDHHFEDS (267 aa)) lie on the Extracellular side of the membrane. The CBS 1 domain maps to 210–271 (MTPISDIFVI…TINPDEEIPV (62 aa)). Asn-273 and Asn-319 each carry an N-linked (GlcNAc...) asparagine glycan. CBS domains are found at residues 275 to 331 (TIRR…DVDS) and 355 to 416 (PNRA…IFDE). Disordered regions lie at residues 321–340 (SVKE…PQER) and 355–374 (PNRA…SKDN). The residue at position 331 (Ser-331) is a Phosphoserine.

It localises to the membrane. The polypeptide is DUF21 domain-containing protein At4g33700 (CBSDUF6) (Arabidopsis thaliana (Mouse-ear cress)).